A 611-amino-acid chain; its full sequence is tRNA uridine 5-carboxymethylaminomethyl modification enzyme MnmG (611 aa).

Position 14–19 (14–19 (GAGHAG)) interacts with FAD. 274 to 288 (GPRYCPSIEDKIVKF) contacts NAD(+).

Belongs to the MnmG family. In terms of assembly, homodimer. Heterotetramer of two MnmE and two MnmG subunits. Requires FAD as cofactor.

It localises to the cytoplasm. Its function is as follows. NAD-binding protein involved in the addition of a carboxymethylaminomethyl (cmnm) group at the wobble position (U34) of certain tRNAs, forming tRNA-cmnm(5)s(2)U34. The chain is tRNA uridine 5-carboxymethylaminomethyl modification enzyme MnmG from Chlamydia abortus (strain DSM 27085 / S26/3) (Chlamydophila abortus).